Here is a 465-residue protein sequence, read N- to C-terminus: MLWTDCLTRLRQELSDNVFAMWIRPLVAEETTDSLRLYAPNPYWTRYIQEHHLELISILVEQLSEGRIRQVEILVDSRPGAILSPAEQPATTTAALSSTPVVPQRVKKEVVEPAATQSNKILNSKKRLLNPLFTFSLFVEGRSNQMAAETCRKVLTQLGASQHNPLFLYGPTGLGKTHLMQAVGNALLQAKPNARVMYMTAESFVQDFVSSLQKGKVEEFKKNCRSLDLLLVDDIHLLAGKEASLVEFFYTFNALLDESKQIILTSDRYPKELTELDPRLVSRFSWGLSVGVEPPDIETRIEILLKKAENSGVDLPRNCALFIAQQVVANVRELEGALNKVVAIARFKGSQIDLDVVRESLKDVLAIRARTISVENIQRVVSEYFRIPLKELIGPKRTRIYARPRQLAMGLARELTGDSFPEIGMAFGGRDHSTVMHACEKVQSLKQEDPIFNEDYKNLLRLLQS.

The domain I, interacts with DnaA modulators stretch occupies residues 1–80 (MLWTDCLTRL…VEILVDSRPG (80 aa)). Positions 80 to 127 (GAILSPAEQPATTTAALSSTPVVPQRVKKEVVEPAATQSNKILNSKKR) are domain II. The segment at 128 to 345 (LLNPLFTFSL…GALNKVVAIA (218 aa)) is domain III, AAA+ region. Residues Gly-173, Gly-175, Lys-176, and Thr-177 each contribute to the ATP site. Residues 346–465 (RFKGSQIDLD…YKNLLRLLQS (120 aa)) form a domain IV, binds dsDNA region.

It belongs to the DnaA family. As to quaternary structure, oligomerizes as a right-handed, spiral filament on DNA at oriC.

It is found in the cytoplasm. Functionally, plays an essential role in the initiation and regulation of chromosomal replication. ATP-DnaA binds to the origin of replication (oriC) to initiate formation of the DNA replication initiation complex once per cell cycle. Binds the DnaA box (a 9 base pair repeat at the origin) and separates the double-stranded (ds)DNA. Forms a right-handed helical filament on oriC DNA; dsDNA binds to the exterior of the filament while single-stranded (ss)DNA is stabiized in the filament's interior. The ATP-DnaA-oriC complex binds and stabilizes one strand of the AT-rich DNA unwinding element (DUE), permitting loading of DNA polymerase. After initiation quickly degrades to an ADP-DnaA complex that is not apt for DNA replication. Binds acidic phospholipids. In Acinetobacter baylyi (strain ATCC 33305 / BD413 / ADP1), this protein is Chromosomal replication initiator protein DnaA.